We begin with the raw amino-acid sequence, 302 residues long: Pseudouridine-5'-phosphate glycosidase (302 aa).

The Proton donor role is filled by E25. K86 and V106 together coordinate substrate. Mn(2+) is bound at residue D138. 140 to 142 contributes to the substrate binding site; the sequence is SAD. K159 (nucleophile) is an active-site residue.

It belongs to the pseudouridine-5'-phosphate glycosidase family. Homotrimer. Mn(2+) serves as cofactor.

The enzyme catalyses D-ribose 5-phosphate + uracil = psi-UMP + H2O. Catalyzes the reversible cleavage of pseudouridine 5'-phosphate (PsiMP) to ribose 5-phosphate and uracil. Functions biologically in the cleavage direction, as part of a pseudouridine degradation pathway. This is Pseudouridine-5'-phosphate glycosidase from Glaesserella parasuis serovar 5 (strain SH0165) (Haemophilus parasuis).